Here is a 412-residue protein sequence, read N- to C-terminus: uncharacterized protein (412 aa).

The 59-residue stretch at 6 to 64 (ELAKGDIISVEVLRPAHGGEGIGHHDGRVIFVKGGIPGDVVDVEIAQLKKKWARGEVVK) folds into the TRAM domain. Positions 242, 278, 300, and 341 each coordinate S-adenosyl-L-methionine. Cys368 serves as the catalytic Nucleophile.

This sequence belongs to the class I-like SAM-binding methyltransferase superfamily. RNA M5U methyltransferase family.

This is an uncharacterized protein from Corynebacterium glutamicum (strain ATCC 13032 / DSM 20300 / JCM 1318 / BCRC 11384 / CCUG 27702 / LMG 3730 / NBRC 12168 / NCIMB 10025 / NRRL B-2784 / 534).